A 579-amino-acid polypeptide reads, in one-letter code: Laccase (579 aa).

Residues 1-31 (MTDWSRRRFLQTGAALGIAGTLPQTTTEVSA) constitute a signal peptide (tat-type signal). Positions 82-214 (WGFDGSYPGP…AGLLGLYSIT (133 aa)) constitute a Plastocyanin-like 1 domain. Positions 145, 147, 192, and 194 each coordinate Cu cation. The tract at residues 372 to 401 (VSDPSTPPEDASADPTSLSLPTPASYDESD) is disordered. Residues 423 to 530 (LNGHVFGDED…NKMMIPFVVE (108 aa)) enclose the Plastocyanin-like 2 domain. An N-linked (GlcNAc...) asparagine glycan is attached at Asn-449. Cu cation-binding residues include His-455, His-458, His-460, His-512, Cys-513, His-514, His-518, and Met-523. Asn-557 is a glycosylation site (N-linked (GlcNAc...) asparagine).

Belongs to the multicopper oxidase family. Cu(2+) is required as a cofactor. Post-translationally, exported by the Tat system. In terms of processing, glycosylated.

The protein resides in the secreted. It catalyses the reaction 4 hydroquinone + O2 = 4 benzosemiquinone + 2 H2O. Its activity is regulated as follows. Inhibited by 1 mM NaN(3), 10 mM thiourea, 10 mM 1,10-phenanthroline, 0.1 mM DL-dithiothreitol (DTT) and 1 mM L-cysteine. The inhibition by DTT and L-cysteine is likely caused by reduction of the oxidized substrate and not by inhibition of the enzyme. In terms of biological role, catalyzes the oxidation of a wide variety of organic substrates, including bilirubin, syringaldazine (SGZ), 2,2'-azino-di-(3-ethylbenzothiazoline)-6-sulfonic acid (ABTS) and dimethoxyphenol (DMP). No oxidation of Fe(2+) or guaiacol. In Haloferax volcanii (strain ATCC 29605 / DSM 3757 / JCM 8879 / NBRC 14742 / NCIMB 2012 / VKM B-1768 / DS2) (Halobacterium volcanii), this protein is Laccase (lccA).